Reading from the N-terminus, the 484-residue chain is Acetyl-coenzyme A carboxylase carboxyl transferase subunit beta, chloroplastic (484 aa).

The region spanning 223 to 484 (LWIQCDNCYG…LHAFFPLNKN (262 aa)) is the CoA carboxyltransferase N-terminal domain. Zn(2+) is bound by residues cysteine 227, cysteine 230, cysteine 243, and cysteine 246. Residues 227 to 246 (CDNCYGLMYKKVKMNVCEQC) form a C4-type zinc finger.

This sequence belongs to the AccD/PCCB family. In terms of assembly, acetyl-CoA carboxylase is a heterohexamer composed of biotin carboxyl carrier protein, biotin carboxylase and 2 subunits each of ACCase subunit alpha and ACCase plastid-coded subunit beta (accD). The cofactor is Zn(2+).

It localises to the plastid. It is found in the chloroplast stroma. The enzyme catalyses N(6)-carboxybiotinyl-L-lysyl-[protein] + acetyl-CoA = N(6)-biotinyl-L-lysyl-[protein] + malonyl-CoA. The protein operates within lipid metabolism; malonyl-CoA biosynthesis; malonyl-CoA from acetyl-CoA: step 1/1. In terms of biological role, component of the acetyl coenzyme A carboxylase (ACC) complex. Biotin carboxylase (BC) catalyzes the carboxylation of biotin on its carrier protein (BCCP) and then the CO(2) group is transferred by the transcarboxylase to acetyl-CoA to form malonyl-CoA. This chain is Acetyl-coenzyme A carboxylase carboxyl transferase subunit beta, chloroplastic, found in Olimarabidopsis pumila (Dwarf rocket).